We begin with the raw amino-acid sequence, 338 residues long: Acyl-CoA:acyl-CoA alkyltransferase (338 aa).

2 residues coordinate Mn(2+): histidine 18 and aspartate 56. The active-site Proton acceptor is the glutamate 97. Catalysis depends on cysteine 123, which acts as the Acyl-thioester intermediate.

This sequence belongs to the thiolase-like superfamily. OleA family. In terms of assembly, homodimer. Weakly associates with the OleBCD complex.

The protein resides in the cytoplasm. The catalysed reaction is a 1,2-saturated acyl-CoA + an acyl-CoA + H2O = an (R)-2-alkyl-3-oxoalkanoate + 2 CoA + H(+). Inhibited by cerulenin. Its function is as follows. Involved in olefin biosynthesis. Catalyzes a non-decarboxylative head-to-head Claisen condensation of two acyl-CoA molecules, generating an (R)-2-alkyl-3-oxoalkanoate. Is active with fatty acyl-CoA substrates that ranged from C(8) to C(16) in length, and is the most active with palmitoyl-CoA and myristoyl-CoA. This Xanthomonas campestris pv. campestris (strain ATCC 33913 / DSM 3586 / NCPPB 528 / LMG 568 / P 25) protein is Acyl-CoA:acyl-CoA alkyltransferase.